The sequence spans 145 residues: Deoxyuridine 5'-triphosphate nucleotidohydrolase (145 aa).

Substrate contacts are provided by residues 62–64 (RSG), asparagine 75, 79–81 (TVD), and lysine 89.

This sequence belongs to the dUTPase family. Mg(2+) serves as cofactor.

The enzyme catalyses dUTP + H2O = dUMP + diphosphate + H(+). Its pathway is pyrimidine metabolism; dUMP biosynthesis; dUMP from dCTP (dUTP route): step 2/2. This enzyme is involved in nucleotide metabolism: it produces dUMP, the immediate precursor of thymidine nucleotides and it decreases the intracellular concentration of dUTP so that uracil cannot be incorporated into DNA. The chain is Deoxyuridine 5'-triphosphate nucleotidohydrolase from Helicobacter pylori (strain ATCC 700392 / 26695) (Campylobacter pylori).